The following is a 372-amino-acid chain: MAKKDYYDVLGVERGADEKEIKRAYKKLAMKYHPDRTQGNKELEEKFKEIQEAYEVLSDKQKRANYDQYGHAAFEQGGFGGGGFSGADFGDIFGDMFGDIFGGGRARQRVVRGDDLRYDLEISLEEAVRGTTKDIQINTLAHCDSCDGSGAEKGSKVETCSTCHGAGRVRRQQGFFVTEQVCPSCHGSGKKIEKPCKSCHGDGRVHKKKNLSVKIPAGVDTGNQLRLSGEGAAGENGAPNGDLYVVIHVRDHHIFERDGSNLYCEVPISFTMAALGGEIEVPTLDGRVKLKIPAETQTGKLFRMRGKGVTSARSAYAGDLICKIIVETPVKLNEEQKALLRQLEESLEGSSNKPKSSSFFDGVKKFFDNLGK.

The 66-residue stretch at 5 to 70 (DYYDVLGVER…QKRANYDQYG (66 aa)) folds into the J domain. The CR-type zinc-finger motif lies at 130–208 (GTTKDIQINT…CHGDGRVHKK (79 aa)). Zn(2+)-binding residues include C143, C146, C160, C163, C182, C185, C196, and C199. 4 CXXCXGXG motif repeats span residues 143–150 (CDSCDGSG), 160–167 (CSTCHGAG), 182–189 (CPSCHGSG), and 196–203 (CKSCHGDG).

This sequence belongs to the DnaJ family. Homodimer. Zn(2+) serves as cofactor.

The protein localises to the cytoplasm. Its function is as follows. Participates actively in the response to hyperosmotic and heat shock by preventing the aggregation of stress-denatured proteins and by disaggregating proteins, also in an autonomous, DnaK-independent fashion. Unfolded proteins bind initially to DnaJ; upon interaction with the DnaJ-bound protein, DnaK hydrolyzes its bound ATP, resulting in the formation of a stable complex. GrpE releases ADP from DnaK; ATP binding to DnaK triggers the release of the substrate protein, thus completing the reaction cycle. Several rounds of ATP-dependent interactions between DnaJ, DnaK and GrpE are required for fully efficient folding. Also involved, together with DnaK and GrpE, in the DNA replication of plasmids through activation of initiation proteins. This is Chaperone protein DnaJ from Pasteurella multocida (strain Pm70).